The following is a 437-amino-acid chain: Diaminopimelate decarboxylase (437 aa).

Position 81 is an N6-(pyridoxal phosphate)lysine (K81). Pyridoxal 5'-phosphate-binding positions include G256 and 298–301 (EPGR). R301, R337, and Y341 together coordinate substrate. C366 acts as the Proton donor in catalysis. Substrate is bound by residues E367 and Y396. Residue Y396 coordinates pyridoxal 5'-phosphate.

It belongs to the Orn/Lys/Arg decarboxylase class-II family. LysA subfamily. In terms of assembly, homodimer. Requires pyridoxal 5'-phosphate as cofactor.

It catalyses the reaction meso-2,6-diaminopimelate + H(+) = L-lysine + CO2. The protein operates within amino-acid biosynthesis; L-lysine biosynthesis via DAP pathway; L-lysine from DL-2,6-diaminopimelate: step 1/1. In terms of biological role, specifically catalyzes the decarboxylation of meso-diaminopimelate (meso-DAP) to L-lysine. The protein is Diaminopimelate decarboxylase of Actinosynnema pretiosum subsp. auranticum.